A 743-amino-acid chain; its full sequence is Catalase-peroxidase (743 aa).

A compositionally biased stretch (polar residues) spans Met1–Gln15. The interval Met1–Asp40 is disordered. The span at Ser16–Pro28 shows a compositional bias: low complexity. The tryptophyl-tyrosyl-methioninium (Trp-Tyr) (with M-259) cross-link spans Trp110–Tyr233. His111 functions as the Proton acceptor in the catalytic mechanism. Positions Tyr233–Met259 form a cross-link, tryptophyl-tyrosyl-methioninium (Tyr-Met) (with W-110). His274 contacts heme b. Residues Asp490–Asn511 are disordered.

This sequence belongs to the peroxidase family. Peroxidase/catalase subfamily. In terms of assembly, homodimer or homotetramer. The cofactor is heme b. Formation of the three residue Trp-Tyr-Met cross-link is important for the catalase, but not the peroxidase activity of the enzyme.

The enzyme catalyses H2O2 + AH2 = A + 2 H2O. It catalyses the reaction 2 H2O2 = O2 + 2 H2O. Functionally, bifunctional enzyme with both catalase and broad-spectrum peroxidase activity. This Mycobacterium marinum (strain ATCC BAA-535 / M) protein is Catalase-peroxidase.